The sequence spans 320 residues: MQYAKISGTGSYLPANRVSNDDLAQKVDTSDEWITARTGIKFRHIAAENEKTSDLAAEAARRALDAAGLDSGEIDLIIVATATPDMQFPSTATIVQQKLGITNGCPAFDVQAVCAGFMYALTTANAYIKSGMAKNALVIGAETFSRIVDWNDRTTCVLFGDGAGAVVLSAADKPGIIHSKLKADGNYLKLLNVPGQIACGKVSGSPYISMDGPGVFKFAVKMLSKIADDVIEEAGYTAAQIDWIVPHQANRRIIESTAKHLGLSMDKVVLTVQDHGNTSAASIPLALDTGIRSGQIKRGQNLLLEGIGGGFAWGAVLLQY.

Active-site residues include cysteine 114 and histidine 247. The segment at 248 to 252 (QANRR) is ACP-binding. Asparagine 277 is a catalytic residue.

This sequence belongs to the thiolase-like superfamily. FabH family. Homodimer.

The protein resides in the cytoplasm. It carries out the reaction malonyl-[ACP] + acetyl-CoA + H(+) = 3-oxobutanoyl-[ACP] + CO2 + CoA. It functions in the pathway lipid metabolism; fatty acid biosynthesis. Catalyzes the condensation reaction of fatty acid synthesis by the addition to an acyl acceptor of two carbons from malonyl-ACP. Catalyzes the first condensation reaction which initiates fatty acid synthesis and may therefore play a role in governing the total rate of fatty acid production. Possesses both acetoacetyl-ACP synthase and acetyl transacylase activities. Its substrate specificity determines the biosynthesis of branched-chain and/or straight-chain of fatty acids. The polypeptide is Beta-ketoacyl-[acyl-carrier-protein] synthase III (Neisseria meningitidis serogroup C (strain 053442)).